The primary structure comprises 177 residues: Ribosome maturation factor RimM (177 aa).

The PRC barrel domain maps to 100–177 (EDEYYWSDLV…TVLVAWPSDY (78 aa)).

It belongs to the RimM family. Binds ribosomal protein uS19.

The protein localises to the cytoplasm. Its function is as follows. An accessory protein needed during the final step in the assembly of 30S ribosomal subunit, possibly for assembly of the head region. Essential for efficient processing of 16S rRNA. May be needed both before and after RbfA during the maturation of 16S rRNA. It has affinity for free ribosomal 30S subunits but not for 70S ribosomes. The chain is Ribosome maturation factor RimM from Psychrobacter arcticus (strain DSM 17307 / VKM B-2377 / 273-4).